Consider the following 350-residue polypeptide: UDP-3-O-acylglucosamine N-acyltransferase (350 aa).

Histidine 244 (proton acceptor) is an active-site residue.

This sequence belongs to the transferase hexapeptide repeat family. LpxD subfamily. Homotrimer.

The enzyme catalyses a UDP-3-O-[(3R)-3-hydroxyacyl]-alpha-D-glucosamine + a (3R)-hydroxyacyl-[ACP] = a UDP-2-N,3-O-bis[(3R)-3-hydroxyacyl]-alpha-D-glucosamine + holo-[ACP] + H(+). It participates in bacterial outer membrane biogenesis; LPS lipid A biosynthesis. In terms of biological role, catalyzes the N-acylation of UDP-3-O-acylglucosamine using 3-hydroxyacyl-ACP as the acyl donor. Is involved in the biosynthesis of lipid A, a phosphorylated glycolipid that anchors the lipopolysaccharide to the outer membrane of the cell. The protein is UDP-3-O-acylglucosamine N-acyltransferase of Herminiimonas arsenicoxydans.